The chain runs to 256 residues: Hemin import ATP-binding protein HmuV (256 aa).

Residues 2-239 form the ABC transporter domain; it reads IHAFAVSVIR…ANVREVYQVD (238 aa). Residue 34–41 participates in ATP binding; sequence GPNGAGKS.

This sequence belongs to the ABC transporter superfamily. Heme (hemin) importer (TC 3.A.1.14.5) family. As to quaternary structure, the complex is composed of two ATP-binding proteins (HmuV), two transmembrane proteins (HmuU) and a solute-binding protein (HmuT).

It localises to the cell inner membrane. In terms of biological role, part of the ABC transporter complex HmuTUV involved in hemin import. Responsible for energy coupling to the transport system. The polypeptide is Hemin import ATP-binding protein HmuV (Hahella chejuensis (strain KCTC 2396)).